Here is a 489-residue protein sequence, read N- to C-terminus: Male-specific lethal 1-like 1 (489 aa).

Disordered stretches follow at residues 126–164 and 224–311; these read PMVS…VRKG and VKKD…EDMQ. Residues 179 to 227 adopt a coiled-coil conformation; sequence LLLQLELIEQQQKHLHNKNKEIEDLKAEKEMLMARIERMEHRLQMVKKD. Residues 347 to 466 enclose the PEHE domain; sequence TVEVPSWRES…LKQQDFDLPW (120 aa). The interval 371–389 is interaction with KAT8 HAT domain; sequence ECLDDSVFLKRHSKLELDE. The Bipartite nuclear localization signal signature appears at 380 to 394; it reads KRHSKLELDEKRRKR.

This sequence belongs to the msl-1 family. Component of a multisubunit histone acetyltransferase complex (MSL). Interacts (via PEHE domain) with KAT8 (via HAT domain) and MSL3 (via MRG domain); both interactions are direct.

The protein localises to the nucleus. It is found in the nucleoplasm. The protein resides in the nucleus speckle. In terms of biological role, component of histone acetyltransferase complex. Within MSL complex, promotes ubiquitination of histone H2B. The polypeptide is Male-specific lethal 1-like 1 (msl1l1) (Danio rerio (Zebrafish)).